A 347-amino-acid polypeptide reads, in one-letter code: Probable nitronate monooxygenase (347 aa).

FMN is bound by residues Asn69, Gln171, Gly176, Gly213, and 232–235 (QIGS).

The protein belongs to the nitronate monooxygenase family. NMO class I subfamily. The cofactor is FMN.

The catalysed reaction is 3 propionate 3-nitronate + 3 O2 + H2O = 3 3-oxopropanoate + 2 nitrate + nitrite + H2O2 + 3 H(+). Functionally, nitronate monooxygenase that uses molecular oxygen to catalyze the oxidative denitrification of alkyl nitronates. Acts on propionate 3-nitronate (P3N), the presumed physiological substrate. Probably functions in the detoxification of P3N, a metabolic poison produced by plants and fungi as a defense mechanism. This chain is Probable nitronate monooxygenase (yrpB), found in Bacillus subtilis (strain 168).